We begin with the raw amino-acid sequence, 101 residues long: NADH-quinone oxidoreductase subunit K (101 aa).

3 helical membrane-spanning segments follow: residues 4–24 (LGHL…GIFL), 30–50 (IVLL…FIAF), and 62–82 (FVFF…AILV).

This sequence belongs to the complex I subunit 4L family. As to quaternary structure, NDH-1 is composed of 14 different subunits. Subunits NuoA, H, J, K, L, M, N constitute the membrane sector of the complex.

It localises to the cell inner membrane. The catalysed reaction is a quinone + NADH + 5 H(+)(in) = a quinol + NAD(+) + 4 H(+)(out). Functionally, NDH-1 shuttles electrons from NADH, via FMN and iron-sulfur (Fe-S) centers, to quinones in the respiratory chain. The immediate electron acceptor for the enzyme in this species is believed to be ubiquinone. Couples the redox reaction to proton translocation (for every two electrons transferred, four hydrogen ions are translocated across the cytoplasmic membrane), and thus conserves the redox energy in a proton gradient. This chain is NADH-quinone oxidoreductase subunit K, found in Xylella fastidiosa (strain 9a5c).